A 303-amino-acid polypeptide reads, in one-letter code: Pycsar effector protein XpPycTIR (303 aa).

14–138 (LVATLTEHRL…RRIAATLARR (125 aa)) is a binding site for a nucleoside 3',5'-cyclic phosphate. Positions 154-273 (RVFIMSSVEA…DLAGLTTIPY (120 aa)) are TIR-like.

It is found in the cytoplasm. It catalyses the reaction NAD(+) + H2O = ADP-D-ribose + nicotinamide + H(+). Pycsar (pyrimidine cyclase system for antiphage resistance) provides immunity against bacteriophage. The pyrimidine cyclase (PycC) synthesizes cyclic nucleotides in response to infection; these serve as specific second messenger signals. The signals activate the adjacent effector, leading to bacterial cell death and abortive phage infection. A clade B Pycsar system. In terms of biological role, the effector gene of a two-gene Pycsar system. Expression of this and adjacent uridylate cyclase XpPycC (AC P0DV28) confers resistance to bacteriophage T7. When cells expressing the Pycsar system are infected by phage T7 at low multiplicity of infection (0.2 MOI) the culture survivey, at 2.0 MOI bacteria enter growth arrest. The same cells enter growth arrest after exposure to 2.5 mM cUMP but not cCMP; the effector protein responds only to the cUMP usually produced by its cognate NTP cyclase. NAD(+) levels in infected cells are depleted between 5 and 10 minutes after infection with T7 at MOI of 2. Probably only responds to cUMP. The polypeptide is Pycsar effector protein XpPycTIR (Xanthomonas perforans).